Consider the following 128-residue polypeptide: S-adenosylmethionine decarboxylase proenzyme (128 aa).

The Schiff-base intermediate with substrate; via pyruvic acid role is filled by serine 61. Serine 61 carries the post-translational modification Pyruvic acid (Ser); by autocatalysis. Catalysis depends on histidine 66, which acts as the Proton acceptor; for processing activity. Cysteine 81 acts as the Proton donor; for catalytic activity in catalysis.

It belongs to the prokaryotic AdoMetDC family. Type 1 subfamily. As to quaternary structure, heterotetramer of two alpha and two beta chains arranged as a dimer of alpha/beta heterodimers. Pyruvate is required as a cofactor. In terms of processing, is synthesized initially as an inactive proenzyme. Formation of the active enzyme involves a self-maturation process in which the active site pyruvoyl group is generated from an internal serine residue via an autocatalytic post-translational modification. Two non-identical subunits are generated from the proenzyme in this reaction, and the pyruvate is formed at the N-terminus of the alpha chain, which is derived from the carboxyl end of the proenzyme. The post-translation cleavage follows an unusual pathway, termed non-hydrolytic serinolysis, in which the side chain hydroxyl group of the serine supplies its oxygen atom to form the C-terminus of the beta chain, while the remainder of the serine residue undergoes an oxidative deamination to produce ammonia and the pyruvoyl group blocking the N-terminus of the alpha chain.

It catalyses the reaction S-adenosyl-L-methionine + H(+) = S-adenosyl 3-(methylsulfanyl)propylamine + CO2. The protein operates within amine and polyamine biosynthesis; S-adenosylmethioninamine biosynthesis; S-adenosylmethioninamine from S-adenosyl-L-methionine: step 1/1. Catalyzes the decarboxylation of S-adenosylmethionine to S-adenosylmethioninamine (dcAdoMet), the propylamine donor required for the synthesis of the polyamines spermine and spermidine from the diamine putrescine. The protein is S-adenosylmethionine decarboxylase proenzyme of Parasynechococcus marenigrum (strain WH8102).